The chain runs to 149 residues: Protein SprT-like (149 aa).

The SprT-like domain occupies 4–144; that stretch reads TDYVKQVSLE…GLCRGKLLLV (141 aa). Histidine 64 lines the Zn(2+) pocket. Residue glutamate 65 is part of the active site. Histidine 68 is a binding site for Zn(2+).

Belongs to the SprT family. Requires Zn(2+) as cofactor.

The protein localises to the cytoplasm. The sequence is that of Protein SprT-like from Streptococcus pneumoniae serotype 4 (strain ATCC BAA-334 / TIGR4).